A 427-amino-acid chain; its full sequence is Serine hydroxymethyltransferase (427 aa).

(6S)-5,6,7,8-tetrahydrofolate contacts are provided by residues Leu117 and 121–123 (GHL). Lys226 carries the post-translational modification N6-(pyridoxal phosphate)lysine.

It belongs to the SHMT family. Homodimer. Pyridoxal 5'-phosphate is required as a cofactor.

The protein localises to the cytoplasm. The enzyme catalyses (6R)-5,10-methylene-5,6,7,8-tetrahydrofolate + glycine + H2O = (6S)-5,6,7,8-tetrahydrofolate + L-serine. It carries out the reaction L-threonine = acetaldehyde + glycine. The catalysed reaction is L-allo-threonine = acetaldehyde + glycine. The protein operates within one-carbon metabolism; tetrahydrofolate interconversion. It functions in the pathway amino-acid biosynthesis; glycine biosynthesis; glycine from L-serine: step 1/1. In terms of biological role, its primary function is to catalyze the reversible interconversion of serine and glycine with tetrahydrofolate (THF) serving as the one-carbon carrier. This reaction serves as the major source of one-carbon groups required for the biosynthesis of purines, thymidylate, methionine, and other important biomolecules. Also exhibits THF-independent aldolase activity toward beta-hydroxyamino acids, producing glycine and aldehydes, via a retro-aldol mechanism. Thus, is able to catalyze the cleavage of L-threonine, L-allo-threonine, L-threo-beta-phenylserine and L-erythro-beta-phenylserine. This second activity is likely to be physiological in H.thermophilus, which is an organism that lacks the ortholog gene for the 'real' threonine aldolase characterized in mesophilic bacteria (LtaE), yeast and plants. In Hydrogenobacter thermophilus (strain DSM 6534 / IAM 12695 / TK-6), this protein is Serine hydroxymethyltransferase.